The primary structure comprises 112 residues: 2Fe-2S ferredoxin (112 aa).

In terms of domain architecture, 2Fe-2S ferredoxin-type spans 5-107; it reads IKVTFIINDG…GIKVHLPAAT (103 aa). [2Fe-2S] cluster-binding residues include C42, C48, C51, and C88.

This sequence belongs to the adrenodoxin/putidaredoxin family. It depends on [2Fe-2S] cluster as a cofactor.

In terms of biological role, ferredoxin are iron-sulfur proteins that transfer electrons in a wide variety of metabolic reactions. In Rickettsia rickettsii, this protein is 2Fe-2S ferredoxin (fdxB).